The chain runs to 672 residues: Glycerophosphocholine phosphodiesterase GPCPD1 (672 aa).

The region spanning methionine 1 to isoleucine 115 is the CBM20 domain. Residues lysine 70 and histidine 88–lysine 89 each bind substrate. Residues serine 175 and serine 424 each carry the phosphoserine modification. The GP-PDE domain occupies proline 318–glutamine 618. A Phosphotyrosine modification is found at tyrosine 608.

Belongs to the glycerophosphoryl diester phosphodiesterase family. In terms of tissue distribution, widely expressed, with highest expression in spinal chord.

The protein resides in the cytoplasm. The protein localises to the cytosol. The enzyme catalyses sn-glycerol 3-phosphocholine + H2O = sn-glycerol 3-phosphate + choline + H(+). Its function is as follows. May be involved in the negative regulation of skeletal muscle differentiation, independently of its glycerophosphocholine phosphodiesterase activity. The protein is Glycerophosphocholine phosphodiesterase GPCPD1 (GPCPD1) of Homo sapiens (Human).